Reading from the N-terminus, the 520-residue chain is MAFLDNPLIILAHIRQSHVTSDDTGMCEMVLIDHDVDLEKLYQSSVSGENSTQMQSNGGETQGYVYSQSVDITSSWDFGIRRRSNTAQKLERLRKERQNQIKCKNVQWKDRNTSHSAEELSSLFERKNFKERALNQGKQSILSVRLEQCPLQLNNPFNEYSKFDGKGHVGTTATKKIDVYLSMQTSQDKLLPMTVVTIANAKVHDLIGLICWQYTTEGREPKLNDNVDAFCLHIAEDDGEVDTDFPPLDSNEPIHKFGFSTLALVEKYSSPGLAAKQSLFVRINAAHGFSLIQVDSTNVTMRDILEKALKRRKGSQRNSGPQYRLEKQSQPNVPVDLDSTLENQNSLEFCLVRENSSRGEEPPEEETQIDIATVQDMLSSHQYKSFKVSMIHRLRFTTDVQLGISGEKVEIDPVTNQKTSTKFWIKQKPISIDSDVLCACDLAEEKSPSHAMFKVTYLSNHDYKHLYFESDAATVNEIVLKVNYILESRASTARADYFAQKQRKLTRRTSFSFQKEKKPG.

Positions 139 to 267 constitute a CRIM domain; it reads QSILSVRLEQ…GFSTLALVEK (129 aa). The tract at residues 279 to 353 is SIN1-type RBD; sequence LFVRINAAHG…QNSLEFCLVR (75 aa). The segment at 310–333 is disordered; it reads KRRKGSQRNSGPQYRLEKQSQPNV. The region spanning 382 to 487 is the SIN1-type PH domain; that stretch reads QYKSFKVSMI…IVLKVNYILE (106 aa). A 1,2-diacyl-sn-glycero-3-phospho-(1D-myo-inositol-3,4,5-trisphosphate) contacts are provided by Arg-393, Lys-428, and Lys-464.

The protein belongs to the SIN1 family. As to quaternary structure, component of the mechanistic target of rapamycin complex 2 (mTORC2), consisting in two heterotretramers composed of MTOR, MLST8, RICTOR and MAPKAP1/SIN1. Contrary to mTORC1, mTORC2 does not bind to and is not sensitive to FKBP12-rapamycin.

It localises to the cell membrane. Its subcellular location is the endoplasmic reticulum membrane. It is found in the early endosome membrane. The protein localises to the late endosome membrane. The protein resides in the lysosome membrane. It localises to the golgi apparatus membrane. Its subcellular location is the mitochondrion outer membrane. It is found in the cytoplasm. The protein localises to the perinuclear region. The protein resides in the nucleus. With respect to regulation, phosphatidylinositol 3,4,5-trisphosphate (PI(3,4,5)P3) promotes MTOR activation by relieving MAPKAP1/SIN1-mediated inhibition of MTOR that takes place in absence of PI(3,4,5)P3. Its function is as follows. Component of the mechanistic target of rapamycin complex 2 (mTORC2), which transduces signals from growth factors to pathways involved in proliferation, cytoskeletal organization, lipogenesis and anabolic output. In response to growth factors, mTORC2 phosphorylates and activates AGC protein kinase family members, including AKT (AKT1, AKT2 and AKT3), PKC (PRKCA, PRKCB and PRKCE) and SGK1. In contrast to mTORC1, mTORC2 is nutrient-insensitive. Within the mTORC2 complex, MAPKAP1/SIN1 acts as a substrate adapter which recognizes and binds AGC protein kinase family members for phosphorylation by MTOR. The protein is Target of rapamycin complex 2 subunit MAPKAP1 (mapkap1) of Xenopus tropicalis (Western clawed frog).